The primary structure comprises 192 residues: Bifunctional protein PyrR (192 aa).

Positions 107-119 match the PRPP-binding motif; it reads VVLVDDVLFSGRT.

The protein belongs to the purine/pyrimidine phosphoribosyltransferase family. PyrR subfamily.

It carries out the reaction UMP + diphosphate = 5-phospho-alpha-D-ribose 1-diphosphate + uracil. Its function is as follows. Regulates the transcription of the pyrimidine nucleotide (pyr) operon in response to exogenous pyrimidines. In terms of biological role, also displays a weak uracil phosphoribosyltransferase activity which is not physiologically significant. The chain is Bifunctional protein PyrR from Corynebacterium efficiens (strain DSM 44549 / YS-314 / AJ 12310 / JCM 11189 / NBRC 100395).